The following is a 472-amino-acid chain: Eukaryotic translation initiation factor 2 subunit 3, X-linked (472 aa).

At A2 the chain carries N-acetylalanine. Position 16 is a phosphoserine (S16). A tr-type G domain is found at 39 to 248 (QATINIGTIG…IVKKIPVPPR (210 aa)). Positions 48–55 (GHVAHGKS) are G1. 51–56 (AHGKST) is a binding site for GTP. The G2 stretch occupies residues 76–80 (NITIK). The segment at 134–137 (DCPG) is G3. Residues 190-193 (NKID) and 225-227 (SAQ) contribute to the GTP site. The segment at 190 to 193 (NKID) is G4. A G5 region spans residues 225–227 (SAQ). The tract at residues 457–469 (GQIRRGVTIKPTV) is interacts with Cdc123.

It belongs to the TRAFAC class translation factor GTPase superfamily. Classic translation factor GTPase family. EIF2G subfamily. In terms of assembly, eukaryotic translation initiation factor 2 eIF2 is a heterotrimeric complex composed of an alpha (EIF2S1), a beta (EIF2S2) and a gamma (EIF2S3) chain. eIF2 is member of the 43S pre-initiation complex (43S PIC). Interacts (via C-terminus) with CDC123; the interaction is direct. Widely expressed.

The protein localises to the cytoplasm. It localises to the cytosol. The catalysed reaction is GTP + H2O = GDP + phosphate + H(+). In terms of biological role, member of the eIF2 complex that functions in the early steps of protein synthesis by forming a ternary complex with GTP and initiator tRNA. This complex binds to a 40S ribosomal subunit, followed by mRNA binding to form the 43S pre-initiation complex (43S PIC). Junction of the 60S ribosomal subunit to form the 80S initiation complex is preceded by hydrolysis of the GTP bound to eIF2 and release of an eIF2-GDP binary complex. In order for eIF2 to recycle and catalyze another round of initiation, the GDP bound to eIF2 must exchange with GTP by way of a reaction catalyzed by eIF-2B. Along with its paralog on chromosome Y, may contribute to spermatogenesis up to the round spermatid stage. This chain is Eukaryotic translation initiation factor 2 subunit 3, X-linked (Eif2s3), found in Rattus norvegicus (Rat).